The sequence spans 149 residues: 3-dehydroquinate dehydratase (149 aa).

The Proton acceptor role is filled by Tyr-24. Positions 75, 81, and 88 each coordinate substrate. His-101 acts as the Proton donor in catalysis. Substrate is bound by residues 102–103 (LS) and Arg-112.

The protein belongs to the type-II 3-dehydroquinase family. In terms of assembly, homododecamer.

It catalyses the reaction 3-dehydroquinate = 3-dehydroshikimate + H2O. It functions in the pathway metabolic intermediate biosynthesis; chorismate biosynthesis; chorismate from D-erythrose 4-phosphate and phosphoenolpyruvate: step 3/7. Catalyzes a trans-dehydration via an enolate intermediate. This is 3-dehydroquinate dehydratase from Bartonella tribocorum (strain CIP 105476 / IBS 506).